Reading from the N-terminus, the 312-residue chain is Acetyl-coenzyme A carboxylase carboxyl transferase subunit alpha (312 aa).

In terms of domain architecture, CoA carboxyltransferase C-terminal spans 36–286 (RLDKEVKSIY…KEYFLDALRT (251 aa)).

The protein belongs to the AccA family. Acetyl-CoA carboxylase is a heterohexamer composed of biotin carboxyl carrier protein (AccB), biotin carboxylase (AccC) and two subunits each of ACCase subunit alpha (AccA) and ACCase subunit beta (AccD).

Its subcellular location is the cytoplasm. It carries out the reaction N(6)-carboxybiotinyl-L-lysyl-[protein] + acetyl-CoA = N(6)-biotinyl-L-lysyl-[protein] + malonyl-CoA. It participates in lipid metabolism; malonyl-CoA biosynthesis; malonyl-CoA from acetyl-CoA: step 1/1. In terms of biological role, component of the acetyl coenzyme A carboxylase (ACC) complex. First, biotin carboxylase catalyzes the carboxylation of biotin on its carrier protein (BCCP) and then the CO(2) group is transferred by the carboxyltransferase to acetyl-CoA to form malonyl-CoA. This chain is Acetyl-coenzyme A carboxylase carboxyl transferase subunit alpha, found in Helicobacter pylori (strain G27).